The chain runs to 178 residues: Caveolin-1 (178 aa).

S2 is modified (N-acetylserine). Phosphoserine is present on S2. Residues 2-94 (SGGKYVDSEG…WKASFTTFTV (93 aa)) are required for homooligomerization. Residues 2-104 (SGGKYVDSEG…TKYWFYRLLS (103 aa)) lie on the Cytoplasmic side of the membrane. K5 carries the N6-acetyllysine; alternate modification. A Glycyl lysine isopeptide (Lys-Gly) (interchain with G-Cter in ubiquitin); alternate cross-link involves residue K5. At Y6 the chain carries Phosphotyrosine. The residue at position 9 (S9) is a Phosphoserine. Y14 is subject to Phosphotyrosine; by ABL1 and INSR. The residue at position 25 (Y25) is a Phosphotyrosine. Glycyl lysine isopeptide (Lys-Gly) (interchain with G-Cter in ubiquitin) cross-links involve residues K26, K30, K39, K47, and K57. The tract at residues 82–94 (DGIWKASFTTFTV) is interaction with CAVIN3. Residues 105–125 (TIFGIPMALIWGIYFAILSFL) constitute an intramembrane region (helical). Over 126 to 178 (HIWAVVPCIKSFLIEIQCISRVYSIYVHTFCDPLFEAIGKIFSNIRISTQKEI) the chain is Cytoplasmic. Residues 131–142 (VPCIKSFLIEIQ) form an interacts with SPRY1, SPRY2, SPRY3 and SPRY4 region. 3 S-palmitoyl cysteine lipidation sites follow: C133, C143, and C156. Residues 149–160 (SIYVHTFCDPLF) are interacts with SPRY1, SPRY2, and SPRY4. The interacts with SPRY1, SPRY2, SPRY3 and SPRY4 stretch occupies residues 167 to 178 (FSNIRISTQKEI).

This sequence belongs to the caveolin family. Homooligomer. Interacts (via the N-terminus) with DPP4; the interaction is direct. Forms a stable heterooligomeric complex with CAV2 that targets to lipid rafts and drives caveolae formation. Interacts with BMX, BTK, CTNNB1, CDH1, GLIPR2, JUP, NOSTRIN, SNAP25 and STX1A. Interacts with SLC7A9. Interacts with TGFBR1. Interacts with CTNNB1, CDH1 and JUP. Interacts with PACSIN2; this interaction induces membrane tubulation. Interacts with CAVIN3 (via leucine-zipper domain) in a cholesterol-sensitive manner. Interacts with EHD2 in a cholesterol-dependent manner. Interacts with CAVIN1. Forms a ternary complex with UBXN6 and VCP; mediates CAV1 targeting to lysosomes for degradation. Interacts with ABCG1; this interaction regulates ABCG1-mediated cholesterol efflux. Interacts with NEU3; this interaction enhances NEU3 sialidase activity within caveola. Interacts (via C-terminus) with SPRY1, SPRY2 (via C-terminus), SPRY3, and SPRY4. Interacts with IGFBP5; this interaction allows trafficking of IGFBP5 from the plasma membrane to the nucleus. Post-translationally, the N-terminus of both isoforms are blocked. In terms of processing, phosphorylated at Tyr-14 by ABL1 in response to oxidative stress. Ubiquitinated. Undergo monoubiquitination and multi- and/or polyubiquitination. Monoubiquitination of N-terminal lysines promotes integration in a ternary complex with UBXN6 and VCP which promotes oligomeric CAV1 targeting to lysosomes for degradation. Ubiquitinated by ZNRF1; leading to degradation and modulation of the TLR4-mediated immune response. Adipose tissue, lung, heart, skeletal muscle, stomach, small bowel, kidney, spleen and testis (at protein level).

It localises to the golgi apparatus membrane. It is found in the cell membrane. The protein localises to the membrane. The protein resides in the caveola. Its subcellular location is the membrane raft. It localises to the golgi apparatus. It is found in the trans-Golgi network. Its function is as follows. May act as a scaffolding protein within caveolar membranes. Forms a stable heterooligomeric complex with CAV2 that targets to lipid rafts and drives caveolae formation. Mediates the recruitment of CAVIN proteins (CAVIN1/2/3/4) to the caveolae. Interacts directly with G-protein alpha subunits and can functionally regulate their activity. Involved in the costimulatory signal essential for T-cell receptor (TCR)-mediated T-cell activation. Its binding to DPP4 induces T-cell proliferation and NF-kappa-B activation in a T-cell receptor/CD3-dependent manner. Recruits CTNNB1 to caveolar membranes and may regulate CTNNB1-mediated signaling through the Wnt pathway. Negatively regulates TGFB1-mediated activation of SMAD2/3 by mediating the internalization of TGFBR1 from membrane rafts leading to its subsequent degradation. Binds 20(S)-hydroxycholesterol (20(S)-OHC). This is Caveolin-1 (Cav1) from Mus musculus (Mouse).